We begin with the raw amino-acid sequence, 389 residues long: 5-hydroxytryptamine receptor 1B (389 aa).

Residues 1-45 (MGNPEASCTPPAVLGSQTGLPHANVSAPPNNCSAPSHIYQDSIAL) lie on the Extracellular side of the membrane. Residues Asn-24 and Asn-31 are each glycosylated (N-linked (GlcNAc...) asparagine). Residues 46–71 (PWKVLLVVLLALITLATTLSNAFVIA) traverse the membrane as a helical segment. Residues 72 to 85 (TVYRTRKLHTPANY) are Cytoplasmic-facing. The helical transmembrane segment at 86–110 (LIASLAFTDLLVSILVMPISTMYTV) threads the bilayer. Residues 111-118 (TGRWTLGQ) lie on the Extracellular side of the membrane. A helical transmembrane segment spans residues 119-144 (ALCDFWLSSDITCCTASIMHLCVIAL). Cys-121 and Cys-198 form a disulfide bridge. Residues Asp-128 and Thr-133 each contribute to the ergotamine site. Positions 145–147 (DRY) match the DRY motif; important for ligand-induced conformation changes and signaling motif. At 145–164 (DRYWAITDAVGYSAKRTPRR) the chain is on the cytoplasmic side. A helical transmembrane segment spans residues 165 to 183 (AAGMIALVWVFSICISLPP). Residues 184 to 204 (FFWRQAKAEEEVLDCLVNTDH) lie on the Extracellular side of the membrane. Val-200 lines the ergotamine pocket. Residues 205-228 (VLYTVYSTGGAFYLPTLLLIALYG) form a helical membrane-spanning segment. Residues 229-314 (RIYVEARSRI…AARERKATKT (86 aa)) are Cytoplasmic-facing. A helical membrane pass occupies residues 315-336 (LGVILGAFIVCWLPFFIISLVM). Topologically, residues 337 to 346 (PICKDACWFH) are extracellular. A helical transmembrane segment spans residues 347 to 369 (MAIFDFFTWLGYLNSLINPIIYT). An NPxxY motif; important for ligand-induced conformation changes and signaling motif is present at residues 364–368 (NPIIY). The Cytoplasmic segment spans residues 370-389 (MSNEDFKQAFHKLIRFKCTT). Cys-387 is lipidated: S-palmitoyl cysteine.

The protein belongs to the G-protein coupled receptor 1 family. In terms of assembly, homodimer. Heterodimer with HTR1D. In terms of processing, phosphorylated. Desensitization of the receptor may be mediated by its phosphorylation. Palmitoylated.

The protein resides in the cell membrane. Functionally, G-protein coupled receptor for 5-hydroxytryptamine (serotonin). Also functions as a receptor for ergot alkaloid derivatives, various anxiolytic and antidepressant drugs and other psychoactive substances, such as lysergic acid diethylamide (LSD). Ligand binding causes a conformation change that triggers signaling via guanine nucleotide-binding proteins (G proteins) and modulates the activity of downstream effectors, such as adenylate cyclase. HTR1B is coupled to G(i)/G(o) G alpha proteins and mediates inhibitory neurotransmission by inhibiting adenylate cyclase activity. Arrestin family members inhibit signaling via G proteins and mediate activation of alternative signaling pathways. Regulates the release of 5-hydroxytryptamine, dopamine and acetylcholine in the brain, and thereby affects neural activity, nociceptive processing, pain perception, mood and behavior. Besides, plays a role in vasoconstriction of cerebral arteries. The polypeptide is 5-hydroxytryptamine receptor 1B (HTR1B) (Cavia porcellus (Guinea pig)).